The following is a 457-amino-acid chain: tRNA modification GTPase MnmE (457 aa).

Residues arginine 25, glutamate 87, and arginine 126 each coordinate (6S)-5-formyl-5,6,7,8-tetrahydrofolate. Residues glycine 223 to phenylalanine 377 form the TrmE-type G domain. Asparagine 233 serves as a coordination point for K(+). GTP-binding positions include asparagine 233–serine 238, threonine 252–threonine 258, and aspartate 277–glycine 280. Serine 237 contacts Mg(2+). 3 residues coordinate K(+): threonine 252, isoleucine 254, and threonine 257. Threonine 258 is a Mg(2+) binding site. Lysine 457 lines the (6S)-5-formyl-5,6,7,8-tetrahydrofolate pocket.

The protein belongs to the TRAFAC class TrmE-Era-EngA-EngB-Septin-like GTPase superfamily. TrmE GTPase family. Homodimer. Heterotetramer of two MnmE and two MnmG subunits. K(+) is required as a cofactor.

It is found in the cytoplasm. Its function is as follows. Exhibits a very high intrinsic GTPase hydrolysis rate. Involved in the addition of a carboxymethylaminomethyl (cmnm) group at the wobble position (U34) of certain tRNAs, forming tRNA-cmnm(5)s(2)U34. The protein is tRNA modification GTPase MnmE of Streptococcus pneumoniae serotype 2 (strain D39 / NCTC 7466).